Reading from the N-terminus, the 977-residue chain is Poly(ADP-ribose) glycohydrolase (977 aa).

Positions 1 to 69 (MSAGPGCEPC…LGRAGQHRGS (69 aa)) are disordered. The tract at residues 1 to 457 (MSAGPGCEPC…LSPDKKWLGT (457 aa)) is A-domain. The short motif at 10-16 (CTKRPRW) is the Nuclear localization signal element. The span at 17–29 (DAAATSPPAASDA) shows a compositional bias: low complexity. Ser-69 carries the phosphoserine modification. The PIP-box (PCNA interacting peptide) motif lies at 77-84 (QKTITSWM). Phosphoserine occurs at positions 138 and 198. A disordered region spans residues 184–407 (SNANVDQSSP…CRNSKQHGRK (224 aa)). Composition is skewed to basic and acidic residues over residues 192-207 (SPKDDHSDTNSEESRD) and 223-234 (TMEDEQGREARS). Thr-200 bears the Phosphothreonine mark. A phosphoserine mark is found at Ser-262, Ser-265, Ser-287, Ser-292, Ser-299, Ser-303, and Ser-317. The segment covering 280–291 (NRLNRQESSLGN) has biased composition (polar residues). Acidic residues predominate over residues 317–332 (SEADEETSPGFDEQED). Residues 333–343 (SSSAQTANKPS) show a composition bias toward polar residues. Lys-341 bears the N6-acetyllysine mark. Residues 346–356 (QPREADTELRK) show a composition bias toward basic and acidic residues. Ser-449 carries the post-translational modification Phosphoserine. The interval 611-796 (QPIPLLKQKM…TEQYSEYTGY (186 aa)) is catalytic. 727–728 (IE) is a binding site for substrate. The active site involves Asp-738. Positions 741 and 755 each coordinate substrate. Residues Glu-756 and Glu-757 contribute to the active site. Substrate is bound by residues Tyr-796 and 870-875 (NWGCGA).

This sequence belongs to the poly(ADP-ribose) glycohydrolase family. Interacts with PCNA. Interacts with NUDT5.

The protein resides in the nucleus. It catalyses the reaction [(1''-&gt;2')-ADP-alpha-D-ribose](n) + H2O = [(1''-&gt;2')-ADP-alpha-D-ribose](n-1) + ADP-D-ribose. Poly(ADP-ribose) glycohydrolase that degrades poly(ADP-ribose) by hydrolyzing the ribose-ribose bonds present in poly(ADP-ribose). PARG acts both as an endo- and exoglycosidase, releasing poly(ADP-ribose) of different length as well as ADP-ribose monomers. It is however unable to cleave the ester bond between the terminal ADP-ribose and ADP-ribosylated residues, leaving proteins that are mono-ADP-ribosylated. Poly(ADP-ribose) is synthesized after DNA damage is only present transiently and is rapidly degraded by PARG. Required to prevent detrimental accumulation of poly(ADP-ribose) upon prolonged replicative stress, while it is not required for recovery from transient replicative stress. Responsible for the prevalence of mono-ADP-ribosylated proteins in cells, thanks to its ability to degrade poly(ADP-ribose) without cleaving the terminal protein-ribose bond. Required for retinoid acid-dependent gene transactivation, probably by removing poly(ADP-ribose) from histone demethylase KDM4D, allowing chromatin derepression at RAR-dependent gene promoters. Involved in the synthesis of ATP in the nucleus, together with PARP1, NMNAT1 and NUDT5. Nuclear ATP generation is required for extensive chromatin remodeling events that are energy-consuming. The chain is Poly(ADP-ribose) glycohydrolase from Bos taurus (Bovine).